The sequence spans 285 residues: Bifunctional protein FolD (285 aa).

Residues 165–167 and S190 contribute to the NADP(+) site; that span reads GRS.

This sequence belongs to the tetrahydrofolate dehydrogenase/cyclohydrolase family. In terms of assembly, homodimer.

The catalysed reaction is (6R)-5,10-methylene-5,6,7,8-tetrahydrofolate + NADP(+) = (6R)-5,10-methenyltetrahydrofolate + NADPH. It catalyses the reaction (6R)-5,10-methenyltetrahydrofolate + H2O = (6R)-10-formyltetrahydrofolate + H(+). Its pathway is one-carbon metabolism; tetrahydrofolate interconversion. Functionally, catalyzes the oxidation of 5,10-methylenetetrahydrofolate to 5,10-methenyltetrahydrofolate and then the hydrolysis of 5,10-methenyltetrahydrofolate to 10-formyltetrahydrofolate. The chain is Bifunctional protein FolD from Streptococcus pneumoniae (strain ATCC BAA-255 / R6).